The chain runs to 64 residues: Cytochrome c oxidase subunit 5C (64 aa).

A helical transmembrane segment spans residues 16-34 (VVKELVIGFSLGLVAGGFW).

This sequence belongs to the cytochrome c oxidase subunit 5C family. In terms of assembly, sweet potato cytochrome C oxidase consists of at least seven different polypeptides species, subunits I, II, III, IV, Va, Vb, and Vc in order of MW.

The protein localises to the mitochondrion inner membrane. This protein is one of the nuclear-coded polypeptide chains of cytochrome c oxidase, the terminal oxidase in mitochondrial electron transport. The sequence is that of Cytochrome c oxidase subunit 5C (COX5C) from Ipomoea batatas (Sweet potato).